We begin with the raw amino-acid sequence, 129 residues long: Fluoride-specific ion channel FluC 2 (129 aa).

Residues 19 to 39 traverse the membrane as a helical segment; sequence GLGLVVPAAAVGGFPLGTLFI. Na(+)-binding residues include Gly74 and Thr77. Residues 95–115 traverse the membrane as a helical segment; the sequence is FGMAAVYIAASLFGGLLASWA.

This sequence belongs to the fluoride channel Fluc/FEX (TC 1.A.43) family.

It localises to the cell membrane. It carries out the reaction fluoride(in) = fluoride(out). With respect to regulation, na(+) is not transported, but it plays an essential structural role and its presence is essential for fluoride channel function. Its function is as follows. Fluoride-specific ion channel. Important for reducing fluoride concentration in the cell, thus reducing its toxicity. This is Fluoride-specific ion channel FluC 2 from Geobacillus kaustophilus (strain HTA426).